Here is a 299-residue protein sequence, read N- to C-terminus: Porphobilinogen deaminase (299 aa).

At Cys-242 the chain carries S-(dipyrrolylmethanemethyl)cysteine.

It belongs to the HMBS family. Monomer. It depends on dipyrromethane as a cofactor.

It carries out the reaction 4 porphobilinogen + H2O = hydroxymethylbilane + 4 NH4(+). Its pathway is porphyrin-containing compound metabolism; protoporphyrin-IX biosynthesis; coproporphyrinogen-III from 5-aminolevulinate: step 2/4. Functionally, tetrapolymerization of the monopyrrole PBG into the hydroxymethylbilane pre-uroporphyrinogen in several discrete steps. The chain is Porphobilinogen deaminase (hemC) from Rickettsia prowazekii (strain Madrid E).